The chain runs to 259 residues: Sorbitol-6-phosphate 2-dehydrogenase (259 aa).

4–33 (VAVVIGGGQTLGAFLCHGLAAEGYRVAVVD) is an NAD(+) binding site. S141 is a substrate binding site. Catalysis depends on Y154, which acts as the Proton acceptor.

Belongs to the short-chain dehydrogenases/reductases (SDR) family. As to quaternary structure, homotetramer.

It catalyses the reaction D-sorbitol 6-phosphate + NAD(+) = beta-D-fructose 6-phosphate + NADH + H(+). The protein operates within carbohydrate metabolism; D-sorbitol degradation; D-fructose 6-phosphate from D-sorbitol 6-phosphate: step 1/1. The polypeptide is Sorbitol-6-phosphate 2-dehydrogenase (srlD) (Escherichia coli (strain K12)).